Consider the following 557-residue polypeptide: NAD(P)H-quinone oxidoreductase chain 4 (557 aa).

The next 14 membrane-spanning stretches (helical) occupy residues 25–45 (FPWL…VPFI), 57–77 (YALF…LKGF), 111–131 (LILL…PVSF), 133–153 (PKLF…VFAV), 157–177 (LLFF…LAIW), 189–209 (FIIY…AMGF), 230–250 (GFQL…LPIV), 264–284 (TAPV…YALL), 298–318 (FAPL…LTSF), 327–347 (IAYS…SFST), 353–373 (AMLQ…LVGA), 397–417 (FALW…SGFV), 438–458 (IVIA…LLSM), and 485–505 (IYII…PRIM).

The protein belongs to the complex I subunit 4 family.

The protein resides in the cellular thylakoid membrane. The catalysed reaction is a plastoquinone + NADH + (n+1) H(+)(in) = a plastoquinol + NAD(+) + n H(+)(out). It carries out the reaction a plastoquinone + NADPH + (n+1) H(+)(in) = a plastoquinol + NADP(+) + n H(+)(out). Its function is as follows. NDH-1 shuttles electrons from NAD(P)H, via FMN and iron-sulfur (Fe-S) centers, to quinones in the respiratory chain. The immediate electron acceptor for the enzyme in this species is believed to be plastoquinone. Couples the redox reaction to proton translocation (for every two electrons transferred, four hydrogen ions are translocated across the cytoplasmic membrane), and thus conserves the redox energy in a proton gradient. In Prochlorococcus marinus (strain SARG / CCMP1375 / SS120), this protein is NAD(P)H-quinone oxidoreductase chain 4.